Reading from the N-terminus, the 277-residue chain is F420-dependent methylenetetrahydromethanopterin dehydrogenase (277 aa).

Belongs to the MTD family.

It carries out the reaction 5,10-methylenetetrahydromethanopterin + oxidized coenzyme F420-(gamma-L-Glu)(n) + 2 H(+) = 5,10-methenyl-5,6,7,8-tetrahydromethanopterin + reduced coenzyme F420-(gamma-L-Glu)(n). The protein operates within one-carbon metabolism; methanogenesis from CO(2); 5,10-methylene-5,6,7,8-tetrahydromethanopterin from 5,10-methenyl-5,6,7,8-tetrahydromethanopterin (coenzyme F420 route): step 1/1. Functionally, catalyzes the reversible reduction of methenyl-H(4)MPT(+) to methylene-H(4)MPT. This Methanococcus maripaludis (strain C5 / ATCC BAA-1333) protein is F420-dependent methylenetetrahydromethanopterin dehydrogenase.